The following is a 342-amino-acid chain: Outer spore wall protein RRT8 (342 aa).

The Cytoplasmic portion of the chain corresponds to M1–H109. The chain crosses the membrane as a helical span at residues I110 to V130. T131 is a topological domain (extracellular). The helical transmembrane segment at L132–V152 threads the bilayer. At H153–K240 the chain is on the cytoplasmic side. The chain crosses the membrane as a helical span at residues V241–A261. At N262–F299 the chain is on the extracellular side. Residues I300–I320 form a helical membrane-spanning segment. At S321–E342 the chain is on the cytoplasmic side.

Belongs to the LDS family.

The protein localises to the prospore membrane. It localises to the lipid droplet. Its subcellular location is the spore wall. Functionally, involved in spore wall assembly. May be involved in the modulation of rDNA transcription. In Saccharomyces cerevisiae (strain ATCC 204508 / S288c) (Baker's yeast), this protein is Outer spore wall protein RRT8.